The sequence spans 302 residues: Sulfate adenylyltransferase subunit 2 (302 aa).

A disordered region spans residues 280-302; sequence RQGRLIDSDQSASMEQKKRQGYF.

The protein belongs to the PAPS reductase family. CysD subfamily. In terms of assembly, heterodimer composed of CysD, the smaller subunit, and CysN.

It carries out the reaction sulfate + ATP + H(+) = adenosine 5'-phosphosulfate + diphosphate. It functions in the pathway sulfur metabolism; hydrogen sulfide biosynthesis; sulfite from sulfate: step 1/3. Functionally, with CysN forms the ATP sulfurylase (ATPS) that catalyzes the adenylation of sulfate producing adenosine 5'-phosphosulfate (APS) and diphosphate, the first enzymatic step in sulfur assimilation pathway. APS synthesis involves the formation of a high-energy phosphoric-sulfuric acid anhydride bond driven by GTP hydrolysis by CysN coupled to ATP hydrolysis by CysD. The sequence is that of Sulfate adenylyltransferase subunit 2 from Shewanella sp. (strain ANA-3).